The chain runs to 413 residues: Serine hydroxymethyltransferase (413 aa).

Residues Leu116 and 120–122 each bind (6S)-5,6,7,8-tetrahydrofolate; that span reads GHL. An N6-(pyridoxal phosphate)lysine modification is found at Lys225. 349–351 provides a ligand contact to (6S)-5,6,7,8-tetrahydrofolate; sequence SPF.

Belongs to the SHMT family. As to quaternary structure, homodimer. Pyridoxal 5'-phosphate serves as cofactor.

The protein resides in the cytoplasm. It carries out the reaction (6R)-5,10-methylene-5,6,7,8-tetrahydrofolate + glycine + H2O = (6S)-5,6,7,8-tetrahydrofolate + L-serine. Its pathway is one-carbon metabolism; tetrahydrofolate interconversion. The protein operates within amino-acid biosynthesis; glycine biosynthesis; glycine from L-serine: step 1/1. Functionally, catalyzes the reversible interconversion of serine and glycine with tetrahydrofolate (THF) serving as the one-carbon carrier. This reaction serves as the major source of one-carbon groups required for the biosynthesis of purines, thymidylate, methionine, and other important biomolecules. Also exhibits THF-independent aldolase activity toward beta-hydroxyamino acids, producing glycine and aldehydes, via a retro-aldol mechanism. This chain is Serine hydroxymethyltransferase, found in Levilactobacillus brevis (strain ATCC 367 / BCRC 12310 / CIP 105137 / JCM 1170 / LMG 11437 / NCIMB 947 / NCTC 947) (Lactobacillus brevis).